Consider the following 214-residue polypeptide: U3 small nucleolar RNA-associated protein 16 (214 aa).

Positions 1–10 are enriched in basic and acidic residues; sequence MSNGHVKFDA. The disordered stretch occupies residues 1-106; it reads MSNGHVKFDA…KSVNETEVTD (106 aa). At Ser16 the chain carries Phosphoserine. A compositionally biased stretch (basic and acidic residues) spans 22 to 41; it reads DRQDDVLVISKKDKEVHSSS. Residues 42 to 52 show a composition bias toward acidic residues; that stretch reads DEESDDDDAPQ. Residues Ser45, Ser65, and Ser144 each carry the phosphoserine modification. Over residues 54–75 the composition is skewed to basic and acidic residues; sequence EGLHSGKSEVESQITQREEAIR. The interval 182-214 is disordered; the sequence is STTQDSKTLPPKKESSIIRSKDRWLNRKALNKG. The span at 192–206 shows a compositional bias: basic and acidic residues; it reads PKKESSIIRSKDRWL.

It belongs to the UTP16 family. Part of the small subunit (SSU) processome composed of at least 40 protein subunits and the RNA chaperone small nucleolar RNA (snoRNA) U3. Interacts with snoRNA U3. Interacts with MPP10.

It is found in the nucleus. The protein localises to the nucleolus. In terms of biological role, functions as part of the small subunit (SSU) processome, first precursor of the small eukaryotic ribosomal subunit that coordinates the first two steps of ribosome biogenesis in transcription of the primary transcript pre-RNA and pre-18S processing. During the assembly of the SSU processome in the nucleolus, many ribosome biogenesis factors, an RNA chaperone and ribosomal proteins associate with the nascent pre-rRNA and work in concert to generate RNA folding, modifications, rearrangements and cleavage as well as targeted degradation of pre-ribosomal RNA by the RNA exosome. Has a role in bud site selection maybe via the regulation of expression of bipolar budding components. This is U3 small nucleolar RNA-associated protein 16 (BUD21) from Saccharomyces cerevisiae (strain ATCC 204508 / S288c) (Baker's yeast).